The primary structure comprises 516 residues: rRNA N(6)-adenosine-methyltransferase ZCCHC4 (516 aa).

Zn(2+) contacts are provided by Cys-40, His-42, Cys-66, Cys-75, Cys-127, Cys-130, His-142, and His-145. The GRF-type zinc finger occupies 40 to 84 (CPHELGPTLLFVKVNQGKEETRRFYACSACRDRKDCNFFQWEDEK). S-adenosyl-L-methionine-binding positions include 174 to 177 (QYLF), Arg-204, Asp-227, 245 to 246 (NM), and Asp-278. Residues 339–360 (QVVDYDNHALYKHGKTGRKQSP) are regulatory loop. 16 residues coordinate Zn(2+): Cys-383, Cys-386, His-396, Cys-397, Cys-400, Cys-403, His-413, Cys-414, Cys-417, Cys-420, His-427, Cys-428, Cys-431, Cys-434, His-439, and Cys-441. The DHHC domain occupies 398–448 (EHCNSCTSKDGRKWNHCFLCKKCVKPSWIHCSICNHCALPDHSCKGPKDGC). A CCHC-type zinc finger spans residues 446-463 (DGCFICGELDHKRSACPN). A compositionally biased stretch (basic residues) spans 472-484 (KAVRKQKQRKSNK). A disordered region spans residues 472 to 516 (KAVRKQKQRKSNKMKMETTKGQSMNHTSATRKKKRRERTHQYLCS). Over residues 490-499 (TKGQSMNHTS) the composition is skewed to polar residues. Positions 500–509 (ATRKKKRRER) are enriched in basic residues.

This sequence belongs to the ZCCHC4 family. Interacts with components of the ASC-1 complex TRIP4, ASCC1, ASCC2 and ASCC3. Interact with AHCYL1 and AHCYL2. Interact with YTHDC2.

It is found in the cytoplasm. Its subcellular location is the nucleus. The protein localises to the nucleolus. The enzyme catalyses adenosine(4220) in 28S rRNA + S-adenosyl-L-methionine = N(6)-methyladenosine(4220) in 28S rRNA + S-adenosyl-L-homocysteine + H(+). RRNA N6-methyltransferase that specifically methylates the adenine in position 4220 of 28S rRNA. N6-methylation of adenine(4220) in 28S rRNA is required for translation. This chain is rRNA N(6)-adenosine-methyltransferase ZCCHC4, found in Bos taurus (Bovine).